Here is a 387-residue protein sequence, read N- to C-terminus: Cell surface GPI-anchored protein ARB_01627 (387 aa).

The first 19 residues, 1-19, serve as a signal peptide directing secretion; the sequence is MAITKYLVSALAVAGLAFA. N-linked (GlcNAc...) asparagine glycosylation is found at asparagine 73, asparagine 175, asparagine 201, asparagine 206, asparagine 231, asparagine 236, asparagine 253, and asparagine 270. The span at 338–361 shows a compositional bias: basic and acidic residues; that stretch reads TCRERQEKPKTGDDHSGGDEEGHK. The disordered stretch occupies residues 338-362; that stretch reads TCRERQEKPKTGDDHSGGDEEGHKG. The GPI-anchor amidated alanine moiety is linked to residue alanine 364. The propeptide at 365-387 is removed in mature form; the sequence is AAFAKAPAAALLIAFVGALQFFL.

This sequence belongs to the SPS2 family. In terms of processing, the GPI-anchor is attached to the protein in the endoplasmic reticulum and serves to target the protein to the cell surface. There, the glucosamine-inositol phospholipid moiety is cleaved off and the GPI-modified mannoprotein is covalently attached via its lipidless GPI glycan remnant to the 1,6-beta-glucan of the outer cell wall layer.

Its subcellular location is the cell membrane. The protein localises to the secreted. It localises to the cell wall. In terms of biological role, required for proper cell wall integrity and for the correct assembly of the mannoprotein outer layer of the cell wall. The sequence is that of Cell surface GPI-anchored protein ARB_01627 from Arthroderma benhamiae (strain ATCC MYA-4681 / CBS 112371) (Trichophyton mentagrophytes).